We begin with the raw amino-acid sequence, 181 residues long: 6,7-dimethyl-8-ribityllumazine synthase (181 aa).

5-amino-6-(D-ribitylamino)uracil-binding positions include Phe23, 61-63 (SFE), and 85-87 (AVI). Position 90 to 91 (90 to 91 (QT)) interacts with (2S)-2-hydroxy-3-oxobutyl phosphate. His93 functions as the Proton donor in the catalytic mechanism. Residue Phe118 coordinates 5-amino-6-(D-ribitylamino)uracil. Arg132 is a (2S)-2-hydroxy-3-oxobutyl phosphate binding site.

Belongs to the DMRL synthase family.

The enzyme catalyses (2S)-2-hydroxy-3-oxobutyl phosphate + 5-amino-6-(D-ribitylamino)uracil = 6,7-dimethyl-8-(1-D-ribityl)lumazine + phosphate + 2 H2O + H(+). Its pathway is cofactor biosynthesis; riboflavin biosynthesis; riboflavin from 2-hydroxy-3-oxobutyl phosphate and 5-amino-6-(D-ribitylamino)uracil: step 1/2. Functionally, catalyzes the formation of 6,7-dimethyl-8-ribityllumazine by condensation of 5-amino-6-(D-ribitylamino)uracil with 3,4-dihydroxy-2-butanone 4-phosphate. This is the penultimate step in the biosynthesis of riboflavin. This Synechococcus elongatus (strain ATCC 33912 / PCC 7942 / FACHB-805) (Anacystis nidulans R2) protein is 6,7-dimethyl-8-ribityllumazine synthase.